Here is a 324-residue protein sequence, read N- to C-terminus: Polyketide biosynthesis acyltransferase homolog PksD (324 aa).

Residue serine 99 is part of the active site.

The protein localises to the cytoplasm. It participates in antibiotic biosynthesis; bacillaene biosynthesis. Probably involved in some intermediate steps for the synthesis of the antibiotic polyketide bacillaene which is involved in secondary metabolism. In Bacillus subtilis (strain 168), this protein is Polyketide biosynthesis acyltransferase homolog PksD (pksD).